The primary structure comprises 85 residues: RNA-binding protein KhpA (85 aa).

The 54-residue stretch at 32–85 (YLEYNLTVNPEDIGRVIGRQGRVASAIRTIVYSVRVSGPKRVRLTIEDGQQKNS) folds into the KH domain.

It belongs to the KhpA RNA-binding protein family. Forms a complex with KhpB.

The protein resides in the cytoplasm. In terms of biological role, a probable RNA chaperone. Forms a complex with KhpB which binds to cellular RNA and controls its expression. Plays a role in peptidoglycan (PG) homeostasis and cell length regulation. Its function is as follows. Necessary for correct cell elongation. This chain is RNA-binding protein KhpA, found in Lactiplantibacillus plantarum (strain ATCC BAA-793 / NCIMB 8826 / WCFS1) (Lactobacillus plantarum).